A 146-amino-acid polypeptide reads, in one-letter code: Basic phospholipase A2 (146 aa).

A signal peptide spans 1–21; that stretch reads MNPAHLLVLAAVCVSLLGASS. Positions 22–27 are excised as a propeptide; that stretch reads VPPRPL. Cystine bridges form between Cys38–Cys97, Cys52–Cys145, Cys54–Cys70, Cys69–Cys127, Cys76–Cys120, Cys86–Cys113, and Cys106–Cys118. The Ca(2+) site is built by Tyr53, Gly55, and Gly57. His73 is a catalytic residue. Residue Asp74 coordinates Ca(2+). Asn109 carries N-linked (GlcNAc...) asparagine glycosylation. The active site involves Asp121.

This sequence belongs to the phospholipase A2 family. Group I subfamily. D49 sub-subfamily. Ca(2+) serves as cofactor. Expressed by the venom gland.

Its subcellular location is the secreted. The catalysed reaction is a 1,2-diacyl-sn-glycero-3-phosphocholine + H2O = a 1-acyl-sn-glycero-3-phosphocholine + a fatty acid + H(+). Its function is as follows. PLA2 catalyzes the calcium-dependent hydrolysis of the 2-acyl groups in 3-sn-phosphoglycerides. This is Basic phospholipase A2 from Micrurus corallinus (Brazilian coral snake).